The chain runs to 286 residues: Bifunctional protein FolD (286 aa).

Residues 166–168 (GQS), serine 191, and isoleucine 232 contribute to the NADP(+) site.

This sequence belongs to the tetrahydrofolate dehydrogenase/cyclohydrolase family. In terms of assembly, homodimer.

It catalyses the reaction (6R)-5,10-methylene-5,6,7,8-tetrahydrofolate + NADP(+) = (6R)-5,10-methenyltetrahydrofolate + NADPH. It carries out the reaction (6R)-5,10-methenyltetrahydrofolate + H2O = (6R)-10-formyltetrahydrofolate + H(+). Its pathway is one-carbon metabolism; tetrahydrofolate interconversion. In terms of biological role, catalyzes the oxidation of 5,10-methylenetetrahydrofolate to 5,10-methenyltetrahydrofolate and then the hydrolysis of 5,10-methenyltetrahydrofolate to 10-formyltetrahydrofolate. The chain is Bifunctional protein FolD from Alkalilimnicola ehrlichii (strain ATCC BAA-1101 / DSM 17681 / MLHE-1).